A 342-amino-acid chain; its full sequence is Succinylglutamate desuccinylase (342 aa).

Positions 63, 66, and 159 each coordinate Zn(2+). Residue Glu222 is part of the active site.

The protein belongs to the AspA/AstE family. Succinylglutamate desuccinylase subfamily. The cofactor is Zn(2+).

It carries out the reaction N-succinyl-L-glutamate + H2O = L-glutamate + succinate. It participates in amino-acid degradation; L-arginine degradation via AST pathway; L-glutamate and succinate from L-arginine: step 5/5. Its function is as follows. Transforms N(2)-succinylglutamate into succinate and glutamate. In Paraburkholderia xenovorans (strain LB400), this protein is Succinylglutamate desuccinylase.